A 223-amino-acid chain; its full sequence is Thiamine-phosphate synthase (223 aa).

Residues 37-41 (QFREK) and D72 each bind 4-amino-2-methyl-5-(diphosphooxymethyl)pyrimidine. Mg(2+)-binding residues include D73 and D92. S110 contributes to the 4-amino-2-methyl-5-(diphosphooxymethyl)pyrimidine binding site. A 2-[(2R,5Z)-2-carboxy-4-methylthiazol-5(2H)-ylidene]ethyl phosphate-binding site is contributed by 136–138 (TQS). Position 139 (K139) interacts with 4-amino-2-methyl-5-(diphosphooxymethyl)pyrimidine. Residues G168 and 188–189 (IS) contribute to the 2-[(2R,5Z)-2-carboxy-4-methylthiazol-5(2H)-ylidene]ethyl phosphate site.

This sequence belongs to the thiamine-phosphate synthase family. The cofactor is Mg(2+).

It catalyses the reaction 2-[(2R,5Z)-2-carboxy-4-methylthiazol-5(2H)-ylidene]ethyl phosphate + 4-amino-2-methyl-5-(diphosphooxymethyl)pyrimidine + 2 H(+) = thiamine phosphate + CO2 + diphosphate. The catalysed reaction is 2-(2-carboxy-4-methylthiazol-5-yl)ethyl phosphate + 4-amino-2-methyl-5-(diphosphooxymethyl)pyrimidine + 2 H(+) = thiamine phosphate + CO2 + diphosphate. The enzyme catalyses 4-methyl-5-(2-phosphooxyethyl)-thiazole + 4-amino-2-methyl-5-(diphosphooxymethyl)pyrimidine + H(+) = thiamine phosphate + diphosphate. It functions in the pathway cofactor biosynthesis; thiamine diphosphate biosynthesis; thiamine phosphate from 4-amino-2-methyl-5-diphosphomethylpyrimidine and 4-methyl-5-(2-phosphoethyl)-thiazole: step 1/1. Functionally, condenses 4-methyl-5-(beta-hydroxyethyl)thiazole monophosphate (THZ-P) and 2-methyl-4-amino-5-hydroxymethyl pyrimidine pyrophosphate (HMP-PP) to form thiamine monophosphate (TMP). In Streptococcus agalactiae serotype III (strain NEM316), this protein is Thiamine-phosphate synthase.